The following is a 234-amino-acid chain: Octanoyltransferase (234 aa).

Residues 50 to 234 (GEAPELVWLL…AFEQVFGPTR (185 aa)) form the BPL/LPL catalytic domain. Residues 88–95 (RGGQITYH), 163–165 (AIG), and 176–178 (GIA) each bind substrate. Catalysis depends on cysteine 194, which acts as the Acyl-thioester intermediate.

The protein belongs to the LipB family.

The protein localises to the cytoplasm. The enzyme catalyses octanoyl-[ACP] + L-lysyl-[protein] = N(6)-octanoyl-L-lysyl-[protein] + holo-[ACP] + H(+). Its pathway is protein modification; protein lipoylation via endogenous pathway; protein N(6)-(lipoyl)lysine from octanoyl-[acyl-carrier-protein]: step 1/2. Catalyzes the transfer of endogenously produced octanoic acid from octanoyl-acyl-carrier-protein onto the lipoyl domains of lipoate-dependent enzymes. Lipoyl-ACP can also act as a substrate although octanoyl-ACP is likely to be the physiological substrate. This chain is Octanoyltransferase, found in Rhodopseudomonas palustris (strain BisA53).